A 4450-amino-acid polypeptide reads, in one-letter code: Gramicidin S synthase 2 (4450 aa).

The segment at 467-1044 is domain 1 (proline-activating); the sequence is DKTIHQLFTE…IQEISNYING (578 aa). Carrier domains lie at 971–1046, 2006–2081, 3051–3126, and 4089–4164; these read VPTN…NGAK, APSS…ADGE, APRT…EETD, and APRN…THQE. O-(pantetheine 4'-phosphoryl)serine is present on residues Ser1006, Ser2041, Ser3086, and Ser4124. A domain 2 (valine-activating) region spans residues 1521–2080; that stretch reads DHVAVGWKDQ…SALAQYIADG (560 aa). A domain 3 (ornithine-activating) region spans residues 2538–3134; sequence YATNKIFHEL…TDTEQYMAIQ (597 aa). Residues 3590 to 4172 form a domain 4 (leucine-activating) region; that stretch reads IQELFEEQVK…QESENNVHQP (583 aa).

The protein belongs to the ATP-dependent AMP-binding enzyme family. In terms of assembly, large multienzyme complex of GrsA and GrsB. The cofactor is pantetheine 4'-phosphate.

Its pathway is antibiotic biosynthesis; gramicidin S biosynthesis. Its function is as follows. This protein is a multifunctional enzyme, able to activate and polymerize the amino acids Pro, Val, Orn and Leu. Activation sites for these AA consist of individual domains. The protein is Gramicidin S synthase 2 (grsB) of Brevibacillus brevis (Bacillus brevis).